Reading from the N-terminus, the 251-residue chain is MRKPIIAGNWKMNKTLSEAVSFVEEVKGQIPAASAVDAVVCSPALFLERLVAATEGTDLQVGAQNMHFEKNGAFTGEISPVALSDLKVGYVVLGHSERREMFAETDESVNKKTIAAFEHGLTPIVCCGETLEERESGKTFDLVAGQVTKALAGLTEEQVKATVIAYEPIWAIGTGKSSSSADANEVCAHIRKVVAEAVSPAAAEAVRIQYGGSVKPENIKEYMAQSDIDGALVGGASLEPASFLGLLGAVK.

Position 9–11 (9–11 (NWK)) interacts with substrate. H95 acts as the Electrophile in catalysis. The active-site Proton acceptor is E167. Residues G173, S213, and 234-235 (GG) contribute to the substrate site. S213 is subject to Phosphoserine.

This sequence belongs to the triosephosphate isomerase family. Homodimer.

Its subcellular location is the cytoplasm. It carries out the reaction D-glyceraldehyde 3-phosphate = dihydroxyacetone phosphate. It functions in the pathway carbohydrate biosynthesis; gluconeogenesis. The protein operates within carbohydrate degradation; glycolysis; D-glyceraldehyde 3-phosphate from glycerone phosphate: step 1/1. Involved in the gluconeogenesis. Catalyzes stereospecifically the conversion of dihydroxyacetone phosphate (DHAP) to D-glyceraldehyde-3-phosphate (G3P). This is Triosephosphate isomerase from Bacillus cereus (strain AH820).